The sequence spans 396 residues: Elongation factor Tu (396 aa).

The 197-residue stretch at 10-206 (KPHVNVGTIG…AVDAYIPTPQ (197 aa)) folds into the tr-type G domain. The tract at residues 19-26 (GHVDHGKT) is G1. 19 to 26 (GHVDHGKT) is a GTP binding site. A Mg(2+)-binding site is contributed by T26. Positions 60–64 (GITIA) are G2. The interval 81–84 (DCPG) is G3. Residues 81 to 85 (DCPGH) and 136 to 139 (NKVD) contribute to the GTP site. Residues 136–139 (NKVD) form a G4 region. The G5 stretch occupies residues 174 to 176 (SAL).

This sequence belongs to the TRAFAC class translation factor GTPase superfamily. Classic translation factor GTPase family. EF-Tu/EF-1A subfamily. As to quaternary structure, monomer.

The protein resides in the cytoplasm. The enzyme catalyses GTP + H2O = GDP + phosphate + H(+). Its function is as follows. GTP hydrolase that promotes the GTP-dependent binding of aminoacyl-tRNA to the A-site of ribosomes during protein biosynthesis. This chain is Elongation factor Tu, found in Anaeromyxobacter dehalogenans (strain 2CP-C).